Reading from the N-terminus, the 82-residue chain is Cell division topological specificity factor (82 aa).

The protein belongs to the MinE family.

Functionally, prevents the cell division inhibition by proteins MinC and MinD at internal division sites while permitting inhibition at polar sites. This ensures cell division at the proper site by restricting the formation of a division septum at the midpoint of the long axis of the cell. This chain is Cell division topological specificity factor, found in Hahella chejuensis (strain KCTC 2396).